The chain runs to 451 residues: Golgi reassembly-stacking protein 2 (451 aa).

The N-myristoyl glycine moiety is linked to residue glycine 2. PDZ GRASP-type domains are found at residues 15-105 (EGYH…FCSF) and 111-199 (NVWH…YGYL). Residues 15–215 (EGYHVLRVQE…PFEEGKKISL (201 aa)) are GRASP. A dimethylated arginine mark is found at arginine 30 and arginine 47. Positions 194 to 199 (IGYGYL) are important for membrane binding. Serine 214 is subject to Phosphoserine. A Phosphothreonine modification is found at threonine 222. Threonine 225 bears the Phosphothreonine; by MAPK mark. The span at 236 to 252 (LSSVSPPSLSPPGTTGV) shows a compositional bias: low complexity. Disordered regions lie at residues 236 to 255 (LSSV…VEQS) and 377 to 451 (EGSS…SEPS). Residues 410–424 (SSLTVDVTSPASKVP) show a composition bias toward polar residues. At serine 411 the chain carries Phosphoserine. A phosphothreonine mark is found at threonine 417 and threonine 435. Serine 443 and serine 448 each carry phosphoserine.

Belongs to the GORASP family. As to quaternary structure, homodimer. Homooligomer. ER stress induces phosphorylation-dependent monomerization. Interacts with BLZF1/Golgin 45. Identified in a complex with RAB2 and GORASP2. Interacts with JAM2 and JAM3. Interacts with members of the p24 cargo receptors. Interacts with CNIH and the cytoplasmic domain of transmembrane TGFA, prior its transit in the trans-Golgi. Interacts with KCTD5. Interacts with TMED2 and TMED3. Interacts with SEC16A in response to ER stress. Interacts (via PDZ GRASP-type 1 domain) with core-glycosylated CFTR in response to ER stress. Myristoylated. Myristoylation is essential for the Golgi targeting. In terms of processing, palmitoylated. Post-translationally, phosphorylated in mitotic cells. ER stress-induced phosphorylation at Ser-443 induces monomerization and subsequent relocalization from Golgi to ER which is essential for mediating unconventional (ER/Golgi-independent) trafficking of CFTR to the cell membrane. Detected in lung, heart and testis. Colocalized in a polarized fashion in the acrosome region with JAM3 in round spermatids (at protein level).

Its subcellular location is the golgi apparatus membrane. It is found in the endoplasmic reticulum membrane. The protein resides in the golgi apparatus. Functionally, key structural protein of the Golgi apparatus. The membrane cisternae of the Golgi apparatus adhere to each other to form stacks, which are aligned side by side to form the Golgi ribbon. Acting in concert with GORASP1/GRASP65, is required for the formation and maintenance of the Golgi ribbon, and may be dispensable for the formation of stacks. However, other studies suggest that GORASP2 plays a role in assembly and membrane stacking of the Golgi cisternae, and in the process by which Golgi stacks reform after breakdown during mitosis and meiosis. May regulate the intracellular transport and presentation of a defined set of transmembrane proteins, such as transmembrane TGFA. Required for normal acrosome formation during spermiogenesis and normal male fertility, probably by promoting colocalization of JAM2 and JAM3 at contact sites between germ cells and Sertoli cells. Mediates ER stress-induced unconventional (ER/Golgi-independent) trafficking of core-glycosylated CFTR to cell membrane. This is Golgi reassembly-stacking protein 2 (Gorasp2) from Mus musculus (Mouse).